Consider the following 663-residue polypeptide: Alcohol oxidase 2 (663 aa).

8–38 (DILVLGGGSSGSCIAGRLANLDHSLKVGLIE) is an FAD binding site. The Proton acceptor role is filled by His567. The short motif at 661-663 (ARF) is the Microbody targeting signal element.

This sequence belongs to the GMC oxidoreductase family. Homooctamer. FAD serves as cofactor.

It localises to the peroxisome matrix. The catalysed reaction is a primary alcohol + O2 = an aldehyde + H2O2. The protein operates within energy metabolism; methane degradation. In terms of biological role, minor isoform of alcohol oxidase, which catalyzes the oxidation of methanol to formaldehyde and hydrogen peroxide, the first step in the methanol utilization pathway of methylotrophic yeasts. This is Alcohol oxidase 2 (AOX2) from Komagataella phaffii (strain ATCC 76273 / CBS 7435 / CECT 11047 / NRRL Y-11430 / Wegner 21-1) (Yeast).